Here is a 324-residue protein sequence, read N- to C-terminus: Clavaminate synthase 1 (324 aa).

Fe cation is bound by residues His-144, Glu-146, and His-279. Arg-293 contributes to the 2-oxoglutarate binding site.

This sequence belongs to the clavaminate synthase family. Fe(2+) is required as a cofactor.

The enzyme catalyses deoxyamidinoproclavaminate + 2-oxoglutarate + O2 = amidinoproclavaminate + succinate + CO2. It catalyses the reaction proclavaminate + 2-oxoglutarate + O2 = dihydroclavaminate + succinate + CO2 + H2O. It carries out the reaction dihydroclavaminate + 2-oxoglutarate + O2 = clavaminate + succinate + CO2 + H2O. It functions in the pathway antibiotic biosynthesis; clavulanate biosynthesis; clavulanate from D-glyceraldehyde 3-phosphate and L-arginine: step 3/8. It participates in antibiotic biosynthesis; clavulanate biosynthesis; clavulanate from D-glyceraldehyde 3-phosphate and L-arginine: step 5/8. Its pathway is antibiotic biosynthesis; clavulanate biosynthesis; clavulanate from D-glyceraldehyde 3-phosphate and L-arginine: step 6/8. The protein is Clavaminate synthase 1 (cs1) of Streptomyces clavuligerus.